We begin with the raw amino-acid sequence, 344 residues long: S-adenosylmethionine:tRNA ribosyltransferase-isomerase (344 aa).

It belongs to the QueA family. As to quaternary structure, monomer.

The protein resides in the cytoplasm. It carries out the reaction 7-aminomethyl-7-carbaguanosine(34) in tRNA + S-adenosyl-L-methionine = epoxyqueuosine(34) in tRNA + adenine + L-methionine + 2 H(+). The protein operates within tRNA modification; tRNA-queuosine biosynthesis. In terms of biological role, transfers and isomerizes the ribose moiety from AdoMet to the 7-aminomethyl group of 7-deazaguanine (preQ1-tRNA) to give epoxyqueuosine (oQ-tRNA). This chain is S-adenosylmethionine:tRNA ribosyltransferase-isomerase, found in Acinetobacter baylyi (strain ATCC 33305 / BD413 / ADP1).